A 343-amino-acid chain; its full sequence is tRNA N6-adenosine threonylcarbamoyltransferase (343 aa).

His-115 and His-119 together coordinate Fe cation. Residues 137-141 (IVSGG), Asp-170, Gly-183, Asp-187, and Asn-276 contribute to the substrate site. A Fe cation-binding site is contributed by Asp-304.

It belongs to the KAE1 / TsaD family. The cofactor is Fe(2+).

Its subcellular location is the cytoplasm. It carries out the reaction L-threonylcarbamoyladenylate + adenosine(37) in tRNA = N(6)-L-threonylcarbamoyladenosine(37) in tRNA + AMP + H(+). Functionally, required for the formation of a threonylcarbamoyl group on adenosine at position 37 (t(6)A37) in tRNAs that read codons beginning with adenine. Is involved in the transfer of the threonylcarbamoyl moiety of threonylcarbamoyl-AMP (TC-AMP) to the N6 group of A37, together with TsaE and TsaB. TsaD likely plays a direct catalytic role in this reaction. The protein is tRNA N6-adenosine threonylcarbamoyltransferase of Staphylococcus carnosus (strain TM300).